Consider the following 305-residue polypeptide: LysM and putative peptidoglycan-binding domain-containing protein 3 (305 aa).

Residues 1–221 lie on the Extracellular side of the membrane; it reads MTGRNQHNGF…PYYGADWGMR (221 aa). An N-linked (GlcNAc...) asparagine glycan is attached at Asn29. The tract at residues 31–60 is disordered; sequence SETEYSEEDGEAFELRSRGRERHHRSTSRD. The LysM domain maps to 68 to 112; sequence LIREIKEGDTLISISLQYFCTVADIKRANNLLTEQDFFALRSLRI. Polar residues predominate over residues 121–144; it reads TETHNTAPHKSSSPSGTCRITETP. A disordered region spans residues 121-156; the sequence is TETHNTAPHKSSSPSGTCRITETPVSGASLDSTSSS. Residues 146–156 are compositionally biased toward low complexity; it reads SGASLDSTSSS. The helical transmembrane segment at 222-242 threads the bilayer; that stretch reads WWTAVAIMLVVGIVTPVFYLL. Residues 243 to 305 lie on the Cytoplasmic side of the membrane; that stretch reads YYEVLMKADV…QHHVKHQEET (63 aa).

It localises to the cell membrane. It is found in the golgi apparatus. In terms of biological role, essential for Golgi structural integrity. The polypeptide is LysM and putative peptidoglycan-binding domain-containing protein 3 (lysmd3) (Danio rerio (Zebrafish)).